The following is a 718-amino-acid chain: MFNVESVERVELCESLLTWIQTFNVDAPCQTAEDLTNGVVMSQVLQKIDPVYFDDNWLNRIKTEVGDNWRLKISNLKKILKGILDYNHEILGQQINDFTLPDVNLIGEHSDAAELGRMLQLILGCAVNCEQKQEYIQAIMMMEESVQHVVMTAIQELMSKESPVSAGHDAYVDLDRQLKKTTEELNEALSAKEEIAQRCHELDMQVAALQEEKSSLLAENQILMERLNQSDSIEDPNSPAGRRHLQLQTQLEQLQEETFRLEAAKDDYRIRCEELEKEISELRQQNDELTTLADEAQSLKDEIDVLRHSSDKVSKLEGQVESYKKKLEDLGDLRRQVKLLEEKNTMYMQNTVSLEEELRKANAARGQLETYKRQVVELQNRLSDESKKADKLDFEYKRLKEKVDGLQKEKDRLRTERDSLKETIEELRCVQAQEGQLTTQGLMPLGSQESSDSLAAEIVTPEIREKLIRLQHENKMLKLNQEDSDNEKIALLQSLLDDANLRKNELETENRLVNQRLLEVQSQVEELQKSLQDQGSKAEDSVLLKKKLEEHLEKLHEANNELQKKRAIIEDLEPRFNNSSLRIEELQEALRKKEEEMKQMEERYKKYLEKAKSVIRTLDPKQNQGAAPEIQALKNQLQERDRLFHSLEKEYEKTKSQRDMEEKYIVSAWYNMGMTLHKKAAEDRLASTGSGQSFLARQRQATSTRRSYPGHVQPATAR.

An N-acetylmethionine modification is found at Met-1. The interval 1–164 is sufficient for interaction with microtubules; it reads MFNVESVERV…QELMSKESPV (164 aa). Ser-6 is subject to Phosphoserine. Residues 10–126 form the Calponin-homology (CH) domain; that stretch reads VELCESLLTW…RMLQLILGCA (117 aa). 2 coiled-coil regions span residues 168 to 433 and 462 to 663; these read HDAY…VQAQ and EIRE…MEEK. Ser-238 is modified (phosphoserine). The sufficient for interaction with IIGP1 stretch occupies residues 450–671; sequence SSDSLAAEIV…EKYIVSAWYN (222 aa). Residues 553–718 are required for association with Golgi; the sequence is EKLHEANNEL…PGHVQPATAR (166 aa). Positions 682–718 are disordered; it reads EDRLASTGSGQSFLARQRQATSTRRSYPGHVQPATAR. A compositionally biased stretch (polar residues) spans 687–706; sequence STGSGQSFLARQRQATSTRR. Ser-693 and Ser-707 each carry phosphoserine.

This sequence belongs to the hook family. Self-associates. Component of the FTS/Hook/FHIP complex (FHF complex), composed of AKTIP/FTS, FHIP1B, and one or more members of the Hook family of proteins HOOK1, HOOK2, and HOOK3. May interact directly with AKTIP/FTS, HOOK1 and HOOK2. Associates with several subunits of the homotypic vesicular sorting complex (the HOPS complex) including VPS16 and VPS41; these interactions may be indirect. Interacts with IIGP1. Interacts with MSR1, and this association is stimulated by ligand binding to MSR1. Interacts with microtubules. Part of a tripartite complex with dynein and dynactin, acts an adapter linking the dynein motor complex and dynactin. Interacts with dynein intermediate chain and dynactin (DCTN1). Interacts with CCDC181. Interacts with LRGUK. As to quaternary structure, (Microbial infection) Interacts with Salmonella typhimurium spiC. As to expression, expressed in brain, cerebellum, heart, intestine, kidney, liver, lung, skeletal muscle, spleen and stomach (at protein level).

The protein resides in the cytoplasm. The protein localises to the cytoskeleton. It is found in the golgi apparatus. Functionally, acts as an adapter protein linking the dynein motor complex to various cargos and converts dynein from a non-processive to a highly processive motor in the presence of dynactin. Facilitates the interaction between dynein and dynactin and activates dynein processivity (the ability to move along a microtubule for a long distance without falling off the track). Predominantly recruits 2 dyneins, which increases both the force and speed of the microtubule motor. Component of the FTS/Hook/FHIP complex (FHF complex). The FHF complex may function to promote vesicle trafficking and/or fusion via the homotypic vesicular protein sorting complex (the HOPS complex). May regulate clearance of endocytosed receptors such as MSR1. Participates in defining the architecture and localization of the Golgi complex. FHF complex promotes the distribution of AP-4 complex to the perinuclear area of the cell. (Microbial infection) Serves as a target for the spiC protein from Salmonella typhimurium, which inactivates it, leading to a strong alteration in cellular trafficking. The chain is Protein Hook homolog 3 (Hook3) from Mus musculus (Mouse).